Reading from the N-terminus, the 34-residue chain is RPLTQHKPHTPGDEHPHGAEPPGXDTALAQIXGD.

A disordered region spans residues 1-25 (RPLTQHKPHTPGDEHPHGAEPPGXD).

Belongs to the hemopexin family. As to expression, expressed by the liver and secreted in plasma.

Its subcellular location is the secreted. In terms of biological role, binds heme and transports it to the liver for breakdown and iron recovery, after which the free hemopexin returns to the circulation. The protein is Hemopexin (HPX) of Gallus gallus (Chicken).